A 63-amino-acid chain; its full sequence is Large ribosomal subunit protein uL29 (63 aa).

Belongs to the universal ribosomal protein uL29 family.

The sequence is that of Large ribosomal subunit protein uL29 from Shewanella halifaxensis (strain HAW-EB4).